The sequence spans 100 residues: Urease subunit gamma (100 aa).

Belongs to the urease gamma subunit family. In terms of assembly, heterotrimer of UreA (gamma), UreB (beta) and UreC (alpha) subunits. Three heterotrimers associate to form the active enzyme.

Its subcellular location is the cytoplasm. It catalyses the reaction urea + 2 H2O + H(+) = hydrogencarbonate + 2 NH4(+). The protein operates within nitrogen metabolism; urea degradation; CO(2) and NH(3) from urea (urease route): step 1/1. In Ectopseudomonas mendocina (strain ymp) (Pseudomonas mendocina), this protein is Urease subunit gamma.